We begin with the raw amino-acid sequence, 815 residues long: Putative transcription factor phnE (815 aa).

A disordered region spans residues 522–577 (PSRRNSDGSAHSSPSSTPSSSSTSSPLPSPASERPPPLDVVTRPSTGTSTPSSPTL). Over residues 523–547 (SRRNSDGSAHSSPSSTPSSSSTSSP) the composition is skewed to low complexity. Over residues 548 to 559 (LPSPASERPPPL) the composition is skewed to pro residues. Low complexity predominate over residues 563-577 (TRPSTGTSTPSSPTL).

The protein localises to the nucleus. Its function is as follows. Putative transcription factor that may be involved in the regulation of the expression of the gene cluster that mediates the biosynthesis of phenalenones such as herqueinone, compounds that have been reported to treat tumors, bacterial infections and/or mycoses, and rheumatic diseases. This Penicillium herquei protein is Putative transcription factor phnE.